Here is a 513-residue protein sequence, read N- to C-terminus: NADH-quinone oxidoreductase subunit N (513 aa).

Transmembrane regions (helical) follow at residues 20 to 40 (SVGF…LIVV), 49 to 69 (STLL…FIYQ), 88 to 108 (FAIF…VITM), 117 to 137 (ISSM…MMMM), 144 to 164 (LMIF…AGYF), 178 to 198 (LIYG…IYGV), 219 to 239 (FVML…IGAV), 260 to 280 (LSVA…YVAL), 295 to 315 (WFTL…VVAL), 323 to 343 (LLAY…IVMD), 351 to 371 (LFYL…VVLI), 394 to 414 (GAAL…IGFI), 429 to 451 (IFMW…YMLI), and 474 to 494 (LVAQ…GLFF).

The protein belongs to the complex I subunit 2 family. In terms of assembly, NDH-1 is composed of 14 different subunits. Subunits NuoA, H, J, K, L, M, N constitute the membrane sector of the complex.

It is found in the cell inner membrane. It carries out the reaction a quinone + NADH + 5 H(+)(in) = a quinol + NAD(+) + 4 H(+)(out). Its function is as follows. NDH-1 shuttles electrons from NADH, via FMN and iron-sulfur (Fe-S) centers, to quinones in the respiratory chain. The immediate electron acceptor for the enzyme in this species is believed to be a menaquinone. Couples the redox reaction to proton translocation (for every two electrons transferred, four hydrogen ions are translocated across the cytoplasmic membrane), and thus conserves the redox energy in a proton gradient. This chain is NADH-quinone oxidoreductase subunit N, found in Chlorobium chlorochromatii (strain CaD3).